The following is a 386-amino-acid chain: Succinate--CoA ligase [ADP-forming] subunit beta (386 aa).

In terms of domain architecture, ATP-grasp spans 9 to 244 (KQILKKYGAV…LNEEDPTEID (236 aa)). Residues lysine 46, 53 to 55 (GRG), glutamate 99, serine 102, and glutamate 107 contribute to the ATP site. Positions 199 and 213 each coordinate Mg(2+). Substrate is bound by residues asparagine 264 and 321–323 (GIM).

The protein belongs to the succinate/malate CoA ligase beta subunit family. As to quaternary structure, heterotetramer of two alpha and two beta subunits. It depends on Mg(2+) as a cofactor.

The catalysed reaction is succinate + ATP + CoA = succinyl-CoA + ADP + phosphate. The enzyme catalyses GTP + succinate + CoA = succinyl-CoA + GDP + phosphate. It participates in carbohydrate metabolism; tricarboxylic acid cycle; succinate from succinyl-CoA (ligase route): step 1/1. Succinyl-CoA synthetase functions in the citric acid cycle (TCA), coupling the hydrolysis of succinyl-CoA to the synthesis of either ATP or GTP and thus represents the only step of substrate-level phosphorylation in the TCA. The beta subunit provides nucleotide specificity of the enzyme and binds the substrate succinate, while the binding sites for coenzyme A and phosphate are found in the alpha subunit. The polypeptide is Succinate--CoA ligase [ADP-forming] subunit beta (Pelagibacter ubique (strain HTCC1062)).